A 458-amino-acid chain; its full sequence is Cell death abnormality protein 8 (458 aa).

Residues 1 to 45 lie on the Cytoplasmic side of the membrane; the sequence is MFLKKHKSKLLLVPRDEEQEDAGIVAVLTDRIPSVLLVRWFDLFC. The chain crosses the membrane as a helical span at residues 46-66; that stretch reads FGFAMCSYALDFFSDIGIAIF. The Extracellular portion of the chain corresponds to 67-77; the sequence is HFWAGRYLSGS. The helical transmembrane segment at 78–98 threads the bilayer; sequence LVLAFALLPSVIINIISMVWM. At 99–123 the chain is on the cytoplasmic side; the sequence is LDDEMHWKRRAHPRRTGTFELNQKR. Residues 124 to 144 form a helical membrane-spanning segment; it reads FIPLSKMIVLCICQMGPLFWY. Over 145–219 the chain is Extracellular; it reads YKALYYGWMF…YYQTGTYPYW (75 aa). The chain crosses the membrane as a helical span at residues 220 to 240; that stretch reads LYFQAASLLLSIISISWSVVV. Topologically, residues 241–274 are cytoplasmic; sequence QNRSLRMIRDDKVNIWPHEAVLQFCWRFLTILAR. 2 consecutive transmembrane segments (helical) span residues 275–295 and 296–316; these read IITL…LISV and HLLV…DACT. Position 317 (H317) is a topological domain, extracellular. A helical membrane pass occupies residues 318 to 338; sequence IEKLLLLINTFIHIFIPFNMV. The Cytoplasmic portion of the chain corresponds to 339-353; sequence EGNTRWRYLTAYSVE. A helical transmembrane segment spans residues 354–374; the sequence is FIEMMLVCWLLPLSLNTFPYI. Topologically, residues 375 to 378 are extracellular; it reads EKVQ. A helical transmembrane segment spans residues 379-399; that stretch reads VGVPISFIAGIAIMMMYYQFF. The Cytoplasmic portion of the chain corresponds to 400–458; sequence HPNRRQLIVTQSQEDLSLNVQKSVETLTPKLESSLEISGEQNTSQDLVSELLLDVEHEN.

It belongs to the XK family. Cleavage by ced-3 activates ced-8 function in promoting phosphatidylserine exposure at the surface of apoptotic cells.

The protein resides in the cell membrane. The catalysed reaction is a 1,2-diacyl-sn-glycero-3-phospho-L-serine(in) = a 1,2-diacyl-sn-glycero-3-phospho-L-serine(out). Its function is as follows. Phospholipid scramblase that acts downstream of ced-9 and caspase ced-3 to promote phosphatidylserine exposure on apoptotic cell surface. Phosphatidylserine is a specific marker only present at the surface of apoptotic cells and acts as a specific signal for engulfment. Regulates apoptosis kinetics during embryonic development. Not required for engulfment of germ cell corpses. The sequence is that of Cell death abnormality protein 8 from Caenorhabditis elegans.